We begin with the raw amino-acid sequence, 173 residues long: Bifunctional protein PyrR (173 aa).

The PRPP-binding signature appears at 93–105 (IILIDDVLYTGRT).

It belongs to the purine/pyrimidine phosphoribosyltransferase family. PyrR subfamily. As to quaternary structure, homodimer and homohexamer; in equilibrium.

The enzyme catalyses UMP + diphosphate = 5-phospho-alpha-D-ribose 1-diphosphate + uracil. Its function is as follows. Regulates transcriptional attenuation of the pyrimidine nucleotide (pyr) operon by binding in a uridine-dependent manner to specific sites on pyr mRNA. This disrupts an antiterminator hairpin in the RNA and favors formation of a downstream transcription terminator, leading to a reduced expression of downstream genes. Functionally, also displays a weak uracil phosphoribosyltransferase activity which is not physiologically significant. The sequence is that of Bifunctional protein PyrR from Streptococcus agalactiae serotype Ia (strain ATCC 27591 / A909 / CDC SS700).